Here is a 202-residue protein sequence, read N- to C-terminus: Imidazole glycerol phosphate synthase subunit HisH (202 aa).

The Glutamine amidotransferase type-1 domain maps to 3-202 (RIVIIDYGLG…KILRNFVEMC (200 aa)). Cys79 (nucleophile) is an active-site residue. Catalysis depends on residues His183 and Glu185.

Heterodimer of HisH and HisF.

Its subcellular location is the cytoplasm. The enzyme catalyses 5-[(5-phospho-1-deoxy-D-ribulos-1-ylimino)methylamino]-1-(5-phospho-beta-D-ribosyl)imidazole-4-carboxamide + L-glutamine = D-erythro-1-(imidazol-4-yl)glycerol 3-phosphate + 5-amino-1-(5-phospho-beta-D-ribosyl)imidazole-4-carboxamide + L-glutamate + H(+). It catalyses the reaction L-glutamine + H2O = L-glutamate + NH4(+). The protein operates within amino-acid biosynthesis; L-histidine biosynthesis; L-histidine from 5-phospho-alpha-D-ribose 1-diphosphate: step 5/9. IGPS catalyzes the conversion of PRFAR and glutamine to IGP, AICAR and glutamate. The HisH subunit catalyzes the hydrolysis of glutamine to glutamate and ammonia as part of the synthesis of IGP and AICAR. The resulting ammonia molecule is channeled to the active site of HisF. This is Imidazole glycerol phosphate synthase subunit HisH from Methanosarcina mazei (strain ATCC BAA-159 / DSM 3647 / Goe1 / Go1 / JCM 11833 / OCM 88) (Methanosarcina frisia).